The following is a 207-amino-acid chain: Urease accessory protein UreG (207 aa).

Residue 12-19 (GPVGAGKT) coordinates GTP.

It belongs to the SIMIBI class G3E GTPase family. UreG subfamily. Homodimer. UreD, UreF and UreG form a complex that acts as a GTP-hydrolysis-dependent molecular chaperone, activating the urease apoprotein by helping to assemble the nickel containing metallocenter of UreC. The UreE protein probably delivers the nickel.

It is found in the cytoplasm. Facilitates the functional incorporation of the urease nickel metallocenter. This process requires GTP hydrolysis, probably effectuated by UreG. The polypeptide is Urease accessory protein UreG (Cereibacter sphaeroides (strain ATCC 17029 / ATH 2.4.9) (Rhodobacter sphaeroides)).